The primary structure comprises 432 residues: Aspartate aminotransferase (432 aa).

45-46 (RG) provides a ligand contact to substrate. 109 to 111 (SSL) is a pyridoxal 5'-phosphate binding site. 148-150 (YDR) contacts substrate. Residues asparagine 197, tyrosine 229, and 262-265 (STSK) contribute to the pyridoxal 5'-phosphate site. Arginine 400 is a substrate binding site.

This sequence belongs to the class-I pyridoxal-phosphate-dependent aminotransferase family. Homodimer. Pyridoxal 5'-phosphate serves as cofactor.

The enzyme catalyses L-aspartate + 2-oxoglutarate = oxaloacetate + L-glutamate. The polypeptide is Aspartate aminotransferase (Corynebacterium glutamicum (strain ATCC 13032 / DSM 20300 / JCM 1318 / BCRC 11384 / CCUG 27702 / LMG 3730 / NBRC 12168 / NCIMB 10025 / NRRL B-2784 / 534)).